A 313-amino-acid polypeptide reads, in one-letter code: Protein FixB (313 aa).

255 to 283 (LYLAVGISGQIQHMVGANASQTIFAINKD) is a binding site for FAD.

Belongs to the ETF alpha-subunit/FixB family. Heterodimer of FixA and FixB.

Its pathway is amine and polyamine metabolism; carnitine metabolism. Its function is as follows. Required for anaerobic carnitine reduction. May bring reductant to CaiA. The chain is Protein FixB from Shigella flexneri.